The chain runs to 455 residues: Succinyl-CoA--L-malate CoA-transferase alpha subunit (455 aa).

The interval 1–58 (MAKASRLTRSTGQPTEVSEGQVTGTSEMPPTGEEPSGHAESKPPASDPMSTPGTGQEQ) is disordered. Polar residues-rich tracts occupy residues 7 to 28 (LTRS…TSEM) and 48 to 58 (PMSTPGTGQEQ). The active-site Nucleophile is the Asp-227.

This sequence belongs to the CoA-transferase III family. As to quaternary structure, forms a large complex composed of six heterodimers (alpha, beta).

It carries out the reaction succinyl-CoA + (S)-malate = (S)-malyl-CoA + succinate. The catalysed reaction is (3S)-citramalate + succinyl-CoA = (3S)-citramalyl-CoA + succinate. Involved in the 3-hydroxypropionate cycle used for autotrophic carbon dioxide fixation. Catalyzes the transfer of CoA moiety from succinyl-CoA to L-malate to yield L-malyl-CoA. The chain is Succinyl-CoA--L-malate CoA-transferase alpha subunit (smtA) from Chloroflexus aurantiacus (strain ATCC 29366 / DSM 635 / J-10-fl).